Here is a 639-residue protein sequence, read N- to C-terminus: Serine/threonine-protein phosphatase 2B catalytic subunit A1 (639 aa).

Fe cation is bound by residues D120, H122, and D148. D148 and N180 together coordinate Zn(2+). H181 (proton donor) is an active-site residue. Residues H229 and H311 each coordinate Zn(2+). Residues K494–P503 show a composition bias toward basic and acidic residues. A disordered region spans residues K494–N602. 2 stretches are compositionally biased toward low complexity: residues A515–P527 and T546–P572.

The protein belongs to the PPP phosphatase family. PP-2B subfamily. Composed of two components (A and B), the A component is the catalytic subunit and the B component confers calcium sensitivity. Fe(3+) serves as cofactor. Requires Zn(2+) as cofactor.

It carries out the reaction O-phospho-L-seryl-[protein] + H2O = L-seryl-[protein] + phosphate. The enzyme catalyses O-phospho-L-threonyl-[protein] + H2O = L-threonyl-[protein] + phosphate. In terms of biological role, calcium-dependent, calmodulin-stimulated protein phosphatase. This subunit may have a role in the calmodulin activation of calcineurin. This chain is Serine/threonine-protein phosphatase 2B catalytic subunit A1 (CNA1), found in Cryptococcus neoformans var. grubii serotype A (strain H99 / ATCC 208821 / CBS 10515 / FGSC 9487) (Filobasidiella neoformans var. grubii).